We begin with the raw amino-acid sequence, 103 residues long: ATP synthase F(0) complex subunit g, mitochondrial (103 aa).

An N-acetylalanine modification is found at A2. N6-acetyllysine occurs at positions 11, 24, 35, and 54.

This sequence belongs to the ATPase g subunit family. As to quaternary structure, component of the ATP synthase complex composed at least of ATP5F1A/subunit alpha, ATP5F1B/subunit beta, ATP5MC1/subunit c (homooctomer), MT-ATP6/subunit a, MT-ATP8/subunit 8, ATP5ME/subunit e, ATP5MF/subunit f, ATP5MG/subunit g, ATP5MK/subunit k, ATP5MJ/subunit j, ATP5F1C/subunit gamma, ATP5F1D/subunit delta, ATP5F1E/subunit epsilon, ATP5PF/subunit F6, ATP5PB/subunit b, ATP5PD/subunit d, ATP5PO/subunit OSCP. ATP synthase complex consists of a soluble F(1) head domain (subunits alpha(3) and beta(3)) - the catalytic core - and a membrane F(0) domain - the membrane proton channel (subunits c, a, 8, e, f, g, k and j). These two domains are linked by a central stalk (subunits gamma, delta, and epsilon) rotating inside the F1 region and a stationary peripheral stalk (subunits F6, b, d, and OSCP).

Its subcellular location is the mitochondrion. The protein resides in the mitochondrion inner membrane. In terms of biological role, subunit g, of the mitochondrial membrane ATP synthase complex (F(1)F(0) ATP synthase or Complex V) that produces ATP from ADP in the presence of a proton gradient across the membrane which is generated by electron transport complexes of the respiratory chain. ATP synthase complex consist of a soluble F(1) head domain - the catalytic core - and a membrane F(1) domain - the membrane proton channel. These two domains are linked by a central stalk rotating inside the F(1) region and a stationary peripheral stalk. During catalysis, ATP synthesis in the catalytic domain of F(1) is coupled via a rotary mechanism of the central stalk subunits to proton translocation. In vivo, can only synthesize ATP although its ATP hydrolase activity can be activated artificially in vitro. Part of the complex F(0) domain. The polypeptide is ATP synthase F(0) complex subunit g, mitochondrial (Mus musculus (Mouse)).